A 375-amino-acid chain; its full sequence is Antichymotrypsin-2 (375 aa).

The protein belongs to the serpin family. Hemolymph.

The protein localises to the secreted. The chain is Antichymotrypsin-2 from Bombyx mori (Silk moth).